We begin with the raw amino-acid sequence, 251 residues long: 5'-nucleotidase SurE (251 aa).

The a divalent metal cation site is built by D8, D9, S39, and N95.

It belongs to the SurE nucleotidase family. A divalent metal cation is required as a cofactor.

The protein resides in the cytoplasm. The enzyme catalyses a ribonucleoside 5'-phosphate + H2O = a ribonucleoside + phosphate. Functionally, nucleotidase that shows phosphatase activity on nucleoside 5'-monophosphates. The chain is 5'-nucleotidase SurE from Ralstonia nicotianae (strain ATCC BAA-1114 / GMI1000) (Ralstonia solanacearum).